Here is a 139-residue protein sequence, read N- to C-terminus: Mannose-specific lectin (139 aa).

Positions 1–109 (DNILYSGETL…ARWATGTNIH (109 aa)) constitute a Bulb-type lectin domain. 22 residues coordinate alpha-D-mannopyranose: glutamine 26, aspartate 28, asparagine 30, tyrosine 34, aspartate 37, lysine 38, tryptophan 41, alanine 42, asparagine 44, glutamine 57, aspartate 59, asparagine 61, tyrosine 65, isoleucine 72, tryptophan 73, asparagine 76, asparagine 83, glutamine 89, aspartate 91, asparagine 93, tyrosine 97, and tryptophan 102. Cysteines 29 and 52 form a disulfide.

Homotetramer; antiparallel. In terms of tissue distribution, detected in bulbs (at protein level).

The protein localises to the secreted. Mannose-specific lectin. Displays antiviral activity and therefore may contribute to defense against infections. Shows agglutinating activity towards rabbit erythrocytes. The protein is Mannose-specific lectin of Narcissus tazetta (Cream narcissus).